Reading from the N-terminus, the 308-residue chain is MAPFSFLLTLLLYTLSAGASVLESRSSALLPRAGSLQQVTNFGDNPTNVGMYIYVPNNLASNPGIIVAIHYCTGTAEAYYNGSPYAKLAEKHGFIVIYPESPYQGKCWDVSSRASLTHNGGGNSNSIANMVKWTIKKYKTNTSKVFVTGSSSGAMMTNVMAATYPDMFAAGVVYSGVAAGCFMSNTNQQAAWNSTCAHGKSIATPEAWAHVAKAMYPGYDGPRPRMQIYHGSADTTLYPQNYQETCKEWAGVFGYDYNAPRSVENNKPQANYKTTTWGKELQGIYATGVGHTVPINGDRDMAWFGFAK.

Positions 1–19 are cleaved as a signal peptide; that stretch reads MAPFSFLLTLLLYTLSAGA. An N-linked (GlcNAc...) asparagine glycan is attached at asparagine 141. The active-site Charge relay system is serine 151. A glycan (N-linked (GlcNAc...) asparagine) is linked at asparagine 193.

It belongs to the carbohydrate esterase 1 (CE1) family. AxeA subfamily. In terms of assembly, monomer.

Its subcellular location is the secreted. It catalyses the reaction Deacetylation of xylans and xylo-oligosaccharides.. Its pathway is glycan degradation; xylan degradation. In terms of biological role, acetylxylan esterase involved in the hydrolysis of xylan, a major structural heterogeneous polysaccharide found in plant biomass representing the second most abundant polysaccharide in the biosphere, after cellulose. Degrades acetylated xylans by cleaving acetyl side groups from the hetero-xylan backbone. This chain is Probable acetylxylan esterase A (axeA), found in Aspergillus clavatus (strain ATCC 1007 / CBS 513.65 / DSM 816 / NCTC 3887 / NRRL 1 / QM 1276 / 107).